A 332-amino-acid polypeptide reads, in one-letter code: Pyrroline-5-carboxylate reductase (332 aa).

The protein belongs to the pyrroline-5-carboxylate reductase family.

The catalysed reaction is L-proline + NADP(+) = (S)-1-pyrroline-5-carboxylate + NADPH + 2 H(+). It carries out the reaction L-proline + NAD(+) = (S)-1-pyrroline-5-carboxylate + NADH + 2 H(+). It participates in amino-acid biosynthesis; L-proline biosynthesis; L-proline from L-glutamate 5-semialdehyde: step 1/1. The polypeptide is Pyrroline-5-carboxylate reductase (pro-1) (Neurospora crassa (strain ATCC 24698 / 74-OR23-1A / CBS 708.71 / DSM 1257 / FGSC 987)).